A 105-amino-acid polypeptide reads, in one-letter code: Pyrimidine/purine nucleoside phosphorylase (105 aa).

This sequence belongs to the nucleoside phosphorylase PpnP family.

The enzyme catalyses a purine D-ribonucleoside + phosphate = a purine nucleobase + alpha-D-ribose 1-phosphate. It catalyses the reaction adenosine + phosphate = alpha-D-ribose 1-phosphate + adenine. The catalysed reaction is cytidine + phosphate = cytosine + alpha-D-ribose 1-phosphate. It carries out the reaction guanosine + phosphate = alpha-D-ribose 1-phosphate + guanine. The enzyme catalyses inosine + phosphate = alpha-D-ribose 1-phosphate + hypoxanthine. It catalyses the reaction thymidine + phosphate = 2-deoxy-alpha-D-ribose 1-phosphate + thymine. The catalysed reaction is uridine + phosphate = alpha-D-ribose 1-phosphate + uracil. It carries out the reaction xanthosine + phosphate = alpha-D-ribose 1-phosphate + xanthine. Catalyzes the phosphorolysis of diverse nucleosides, yielding D-ribose 1-phosphate and the respective free bases. Can use uridine, adenosine, guanosine, cytidine, thymidine, inosine and xanthosine as substrates. Also catalyzes the reverse reactions. This Anaeromyxobacter sp. (strain Fw109-5) protein is Pyrimidine/purine nucleoside phosphorylase.